A 494-amino-acid chain; its full sequence is Sucrose-6-phosphate hydrolase (494 aa).

Substrate contacts are provided by residues 45–48 (LLND), Gln64, 107–108 (YS), 168–169 (RD), and Glu223. Residue Asp48 is part of the active site.

The protein belongs to the glycosyl hydrolase 32 family.

It catalyses the reaction Hydrolysis of terminal non-reducing beta-D-fructofuranoside residues in beta-D-fructofuranosides.. It participates in glycan biosynthesis; sucrose metabolism. The chain is Sucrose-6-phosphate hydrolase (scrB) from Staphylococcus xylosus.